Reading from the N-terminus, the 239-residue chain is NAD(P)H-hydrate epimerase (239 aa).

In terms of domain architecture, YjeF N-terminal spans 14–220; it reads AAALDQELMS…EMAEQYNLDI (207 aa). 64–68 provides a ligand contact to (6S)-NADPHX; the sequence is NNGGD. Residues Asn-65 and Asp-126 each contribute to the K(+) site. (6S)-NADPHX-binding positions include 130–136 and Asp-159; that span reads GFSFSGE. K(+) is bound at residue Ser-162.

This sequence belongs to the NnrE/AIBP family. Requires K(+) as cofactor.

It localises to the cytoplasm. Its subcellular location is the mitochondrion. It carries out the reaction (6R)-NADHX = (6S)-NADHX. The catalysed reaction is (6R)-NADPHX = (6S)-NADPHX. Catalyzes the epimerization of the S- and R-forms of NAD(P)HX, a damaged form of NAD(P)H that is a result of enzymatic or heat-dependent hydration. This is a prerequisite for the S-specific NAD(P)H-hydrate dehydratase to allow the repair of both epimers of NAD(P)HX. The polypeptide is NAD(P)H-hydrate epimerase (Phaeosphaeria nodorum (strain SN15 / ATCC MYA-4574 / FGSC 10173) (Glume blotch fungus)).